Here is a 376-residue protein sequence, read N- to C-terminus: Oligopeptide transport system permease protein OppC (376 aa).

The next 7 membrane-spanning stretches (helical) occupy residues 46-66 (WAIL…IVPL), 149-169 (YPLL…WASM), 173-193 (LWIA…YGAI), 209-229 (IIEI…GATF), 242-262 (VIFT…RIYI), 297-317 (LAVV…SLVF), and 341-361 (IALI…TRVF). Positions 169 to 362 (MAKSLWIAIV…ILTVSTRVFA (194 aa)) constitute an ABC transmembrane type-1 domain.

It belongs to the binding-protein-dependent transport system permease family. OppBC subfamily. The complex is composed of two ATP-binding proteins (OppD and OppF), two transmembrane proteins (OppB and OppC) and a solute-binding protein (OppA).

The protein localises to the cell membrane. Its function is as follows. Part of the ABC transporter complex OppABCDF involved in the uptake of oligopeptides. Probably responsible for the translocation of the substrate across the membrane. This Mycoplasma pneumoniae (strain ATCC 29342 / M129 / Subtype 1) (Mycoplasmoides pneumoniae) protein is Oligopeptide transport system permease protein OppC (oppC).